We begin with the raw amino-acid sequence, 500 residues long: Glycerol kinase (500 aa).

Thr11 contributes to the ADP binding site. ATP-binding residues include Thr11, Thr12, and Ser13. Thr11 contributes to the sn-glycerol 3-phosphate binding site. Arg15 is an ADP binding site. Sn-glycerol 3-phosphate-binding residues include Arg81, Glu82, Tyr133, and Asp242. Glycerol is bound by residues Arg81, Glu82, Tyr133, Asp242, and Gln243. ADP contacts are provided by Thr264 and Gly307. The ATP site is built by Thr264, Gly307, Gln311, and Gly411. Gly411 serves as a coordination point for ADP.

Belongs to the FGGY kinase family.

It carries out the reaction glycerol + ATP = sn-glycerol 3-phosphate + ADP + H(+). It participates in polyol metabolism; glycerol degradation via glycerol kinase pathway; sn-glycerol 3-phosphate from glycerol: step 1/1. Inhibited by fructose 1,6-bisphosphate (FBP). In terms of biological role, key enzyme in the regulation of glycerol uptake and metabolism. Catalyzes the phosphorylation of glycerol to yield sn-glycerol 3-phosphate. In Rhodopseudomonas palustris (strain BisA53), this protein is Glycerol kinase.